Here is a 491-residue protein sequence, read N- to C-terminus: Cytochrome P450 81F2 (491 aa).

The helical transmembrane segment at Val-283 to Thr-303 threads the bilayer. Residue Cys-429 coordinates heme.

The protein belongs to the cytochrome P450 family. The cofactor is heme.

The protein resides in the membrane. Its pathway is secondary metabolite biosynthesis. Involved in indole glucosinolate biosynthesis. Catalyzes hydroxylation reactions of the glucosinolate indole ring. Converts indol-3-yl-methylglucosinolate (I3M) to 4-hydroxy-indol-3-yl-methylglucosinolate (4OH-I3M) and/or 1-hydroxy-indol-3-yl-methylglucosinolate (1OH-I3M) intermediates. These hydroxy intermediates are converted to 4-methoxy-indol-3-yl-methylglucosinolate (4MO-I3M) and 1-methoxy-indol-3-yl-methylglucosinolate (1MO-I3M) by indole glucosinolate methyltransferase 1 and 2 (IGMT1 and IGMT2). Contributes to defense against the green peach aphid (Myzus persicae), a generalist phloem-feeding herbivore. Required for the biosynthesis of antifungal indole glucosinolate metabolites. Required for the pathogen-induced accumulation of 4MO-I3M, which in turn is activated by the atypical BGLU26/PEN2 myrosinase. Required for the biosynthesis of Trp-derived antifungal compounds and non-host resistance to the necrotrophic fungal pathogen Plectosphaerella cucumerina. Required for resistance to the non-adapted fungal pathogen Colletotrichum gloeosporioides. The polypeptide is Cytochrome P450 81F2 (Arabidopsis thaliana (Mouse-ear cress)).